The chain runs to 3498 residues: Mediator of RNA polymerase II transcription subunit 12 (3498 aa).

6 disordered regions span residues 365–456, 497–764, 2209–2576, 2589–2620, 2637–2889, and 2917–3498; these read IKQH…HTDI, GGVG…EPEK, AKKR…AYMK, ENNR…EAYA, LRKE…KEKQ, and NVAG…PNQY. Residues 368–394 are compositionally biased toward basic residues; the sequence is HEKRKAGSLKKSERRRRRGLSKNRPKK. Over residues 404–416 the composition is skewed to basic and acidic residues; sequence SLDHDKVQIKQEP. 2 stretches are compositionally biased toward polar residues: residues 424–440 and 512–536; these read GQQS…SHQY and SNPT…SASP. Residues 539–570 are a coiled coil; it reads SVDKENECEKKEDESKTKEKNKDKEKDKEKEK. 2 stretches are compositionally biased toward basic and acidic residues: residues 540–578 and 593–614; these read VDKE…HTND and ANDK…TGKE. Positions 621 to 630 are enriched in low complexity; that stretch reads SKTAKTSTSA. Composition is skewed to basic and acidic residues over residues 691–719, 738–764, and 2209–2285; these read EVDK…KKAD, ESEK…EPEK, and AKKR…KRAS. A required for nuclear localization region spans residues 2142–3498; the sequence is QTTRLDKVAK…YPNQQPPNQY (1357 aa). Residues 2203–2290 are a coiled coil; the sequence is VIDEEEAKKR…EKRASDAAAA (88 aa). Low complexity-rich tracts occupy residues 2342-2360 and 2409-2431; these read RADT…APIA and LADA…SSMP. The stretch at 2395-2420 forms a coiled coil; that stretch reads RNLLNRKKEEKRNSLADASAAAAAAN. Polar residues predominate over residues 2444-2456; sequence QSAGATQQLQGMQ. Over residues 2459–2479 the composition is skewed to low complexity; that stretch reads QMGGSMSGMNQNMGGMNQSMS. The span at 2514–2530 shows a compositional bias: polar residues; it reads NRSSGPVSSETRQQIME. Composition is skewed to basic and acidic residues over residues 2547–2576, 2589–2616, and 2637–2724; these read QKQR…AYMK, ENNR…RAAE, and LRKE…EQQR. Residues 2725–2770 are compositionally biased toward low complexity; the sequence is RSQQNPYMNQQGQYSQQPPPSYQQSSYPNNYQPGQQGNQPPNYQQP. Positions 2771-2783 are enriched in polar residues; sequence SHQSMQQGHQAGY. Residues 2784 to 2810 show a composition bias toward low complexity; sequence QQTSNQMQMNMQQQQNRQQGGPQQSFS. Polar residues-rich tracts occupy residues 2816–2827, 2842–2852, 2868–2881, and 2926–2956; these read NQPSQPGYSGYN, RNPFGNQQDMQ, HAQQ…QLSL, and GQQQ…SSNP. Low complexity predominate over residues 2957–2993; that stretch reads QGGMQSYQQQQPVLGQPGPIQTGQSTQQQIPAQSQQQ. Residues 2994–3009 are compositionally biased toward polar residues; the sequence is YNSGRPQMHTTPTKND. Low complexity predominate over residues 3039-3100; sequence GQNVPGGYQQ…NVSQSQSAAQ (62 aa). Residues 3103-3127 are compositionally biased toward polar residues; that stretch reads RPSQDSAYQQSGYNQTGNQSYQRPD. Composition is skewed to low complexity over residues 3128 to 3184 and 3192 to 3223; these read QQQQ…SAQY and QGYD…QTQQ. Residues 3231–3253 are compositionally biased toward polar residues; that stretch reads SGYTANSGGSSNILNQSMEESGL. A compositionally biased stretch (low complexity) spans 3254-3311; sequence NQGFSGASSNASSQQGGSSQMQQSGYGMPGNQMQMQQNQKQQVQRGMPTGMGQTNMGQ. Residues 3312 to 3321 show a composition bias toward gly residues; it reads SGMGQSGMGQ. Composition is skewed to low complexity over residues 3336 to 3356 and 3370 to 3408; these read QGQQ…NQRG and QQQH…QGQQ. Over residues 3414–3425 the composition is skewed to polar residues; the sequence is PSQQQSGAAYSN. Residues 3426-3436 show a composition bias toward low complexity; that stretch reads QMQFQGVRQGQ. The span at 3437–3446 shows a compositional bias: gly residues; it reads QGMGGMGGSG. Residues 3447 to 3498 are compositionally biased toward low complexity; the sequence is QQQPQTQPHGSNQYYQQQQDQRMQQQPQQPGQQQQHGYGMGQYPNQQPPNQY.

Belongs to the Mediator complex subunit 12 family. Component of the Mediator complex. In terms of tissue distribution, ubiquitously expressed.

The protein localises to the nucleus. Its function is as follows. Component of the Mediator complex, a coactivator involved in regulated gene transcription of nearly all RNA polymerase II-dependent genes. Mediator functions as a bridge to convey information from gene-specific regulatory proteins to the basal RNA polymerase II transcription machinery. Mediator is recruited to promoters by direct interactions with regulatory proteins and serves as a scaffold for the assembly of a functional preinitiation complex with RNA polymerase II and the general transcription factors. Functions downstream of let-60 during vulval induction. Required for asymmetric division of T-cells and for hypodermal development. This chain is Mediator of RNA polymerase II transcription subunit 12 (dpy-22), found in Caenorhabditis elegans.